Here is a 775-residue protein sequence, read N- to C-terminus: Meiotic driver SPOK2 (775 aa).

A coiled-coil region spans residues 4–69 (KDRIAQLLRE…RCERERLQLE (66 aa)). Disordered stretches follow at residues 18 to 51 (KARE…REEE), 211 to 249 (QKDD…YICS), 442 to 525 (LSSA…AMAD), and 734 to 761 (PPPK…AQLF). Positions 444–457 (SAPSSQNTDISEYT) are enriched in polar residues.

It localises to the cytoplasm. The protein resides in the nucleus. In terms of biological role, promotes unequal transmission of alleles from the parental zygote to progeny spores by acting as poison/antidote system, leading to poisoning of progeny that do not inherit the allele. May possess DNA nuclease activity that leads to spore killing, and a kinase activity that confers resistance to the nuclease activity. The protein is Meiotic driver SPOK2 of Podospora anserina (strain S / ATCC MYA-4624 / DSM 980 / FGSC 10383) (Pleurage anserina).